We begin with the raw amino-acid sequence, 100 residues long: Large ribosomal subunit protein bL28 (100 aa).

It belongs to the bacterial ribosomal protein bL28 family.

The chain is Large ribosomal subunit protein bL28 from Gluconacetobacter diazotrophicus (strain ATCC 49037 / DSM 5601 / CCUG 37298 / CIP 103539 / LMG 7603 / PAl5).